Consider the following 284-residue polypeptide: Bifunctional protein FolD (284 aa).

NADP(+) contacts are provided by residues 166-168 (GAS) and Ile232.

The protein belongs to the tetrahydrofolate dehydrogenase/cyclohydrolase family. In terms of assembly, homodimer.

It catalyses the reaction (6R)-5,10-methylene-5,6,7,8-tetrahydrofolate + NADP(+) = (6R)-5,10-methenyltetrahydrofolate + NADPH. The catalysed reaction is (6R)-5,10-methenyltetrahydrofolate + H2O = (6R)-10-formyltetrahydrofolate + H(+). It functions in the pathway one-carbon metabolism; tetrahydrofolate interconversion. Its function is as follows. Catalyzes the oxidation of 5,10-methylenetetrahydrofolate to 5,10-methenyltetrahydrofolate and then the hydrolysis of 5,10-methenyltetrahydrofolate to 10-formyltetrahydrofolate. This chain is Bifunctional protein FolD, found in Glaesserella parasuis serovar 5 (strain SH0165) (Haemophilus parasuis).